Reading from the N-terminus, the 422-residue chain is MNNRGAVTDMISQLPEPLILQILGSLPTKVAITTSVLSKQWQSHWKMMPKLEFDSFLRRLDLENVTKCLLSHKAPVLQTFSLKVRLDRRNNAVDIGCLIGIAMTRNVRKLVLEVYFHRGTFTFPRSLYHCETLETLELILNVVMDVPPSVYLKSLKTLYLLAVDFKDDESVINLLSGCPNLQDLVMRRNSSSNVKTFTIAVPSLQRLAIHNGSGTPQHCGYTINTPSLKYLKLEGSKAFESFMVENVSELIEVNITDVSEIIDEKLRVFLTSVTRLSLALSPSVFTFPTGIIFNQLVYLEICTNKTSWWKLLPLMLHSSPKLQVLKLIDDTDGMNYVEASGEWNQPKNVPECLHHLEKFIWEGYKWKREEIEVAKYILKNTNRLKRAIFSLKGISSEDRLVVVEDLKSVVMATTNSCQFQFI.

Residues 8-60 (TDMISQLPEPLILQILGSLPTKVAITTSVLSKQWQSHWKMMPKLEFDSFLRRL) form the F-box domain. 3 LRR repeats span residues 132–153 (TLET…VYLK), 154–175 (SLKT…INLL), and 180–201 (NLQD…TIAV). Residues 342-391 (EWNQPKNVPECLHHLEKFIWEGYKWKREEIEVAKYILKNTNRLKRAIFSL) form the FBD domain.

This chain is Putative FBD-associated F-box protein At1g55030, found in Arabidopsis thaliana (Mouse-ear cress).